The primary structure comprises 177 residues: Small ribosomal subunit protein uS5 (177 aa).

The region spanning 21 to 84 (LLDRVVKIKR…KQASRSMIHV (64 aa)) is the S5 DRBM domain.

Belongs to the universal ribosomal protein uS5 family. In terms of assembly, part of the 30S ribosomal subunit. Contacts proteins S4 and S8.

In terms of biological role, with S4 and S12 plays an important role in translational accuracy. Located at the back of the 30S subunit body where it stabilizes the conformation of the head with respect to the body. This chain is Small ribosomal subunit protein uS5, found in Rhodopirellula baltica (strain DSM 10527 / NCIMB 13988 / SH1).